The following is a 357-amino-acid chain: Peptide chain release factor 1 (357 aa).

Gln233 bears the N5-methylglutamine mark. Residues 284-305 (RSASISADRKSQVGTGDRSERI) are disordered.

Belongs to the prokaryotic/mitochondrial release factor family. Post-translationally, methylated by PrmC. Methylation increases the termination efficiency of RF1.

The protein resides in the cytoplasm. Functionally, peptide chain release factor 1 directs the termination of translation in response to the peptide chain termination codons UAG and UAA. The chain is Peptide chain release factor 1 from Clostridium novyi (strain NT).